The primary structure comprises 165 residues: Large ribosomal subunit protein uL30 (165 aa).

This sequence belongs to the universal ribosomal protein uL30 family. As to quaternary structure, part of the 50S ribosomal subunit.

The polypeptide is Large ribosomal subunit protein uL30 (Thermoplasma acidophilum (strain ATCC 25905 / DSM 1728 / JCM 9062 / NBRC 15155 / AMRC-C165)).